A 580-amino-acid polypeptide reads, in one-letter code: L-aspartate oxidase (580 aa).

FAD contacts are provided by residues 26 to 29 (SGVA), Lys49, 56 to 63 (STRWAQGG), and Asp227. Arg297 acts as the Proton donor/acceptor in catalysis. FAD contacts are provided by residues Glu382 and 398-399 (SL). Positions 556 to 580 (VHTTDTPEFPPTVHGAQPTHRPQEQ) are disordered.

The protein belongs to the FAD-dependent oxidoreductase 2 family. NadB subfamily. Requires FAD as cofactor.

The protein resides in the cytoplasm. The enzyme catalyses L-aspartate + O2 = iminosuccinate + H2O2. The protein operates within cofactor biosynthesis; NAD(+) biosynthesis; iminoaspartate from L-aspartate (oxidase route): step 1/1. Its function is as follows. Catalyzes the oxidation of L-aspartate to iminoaspartate, the first step in the de novo biosynthesis of NAD(+). The chain is L-aspartate oxidase (nadB) from Streptomyces coelicolor (strain ATCC BAA-471 / A3(2) / M145).